The chain runs to 377 residues: Opsin-5 (377 aa).

The Extracellular portion of the chain corresponds to 1 to 33 (MALNHTALPQDERLPHYLRDEDPFASKLSWEAD). N-linked (GlcNAc...) asparagine glycosylation is present at N4. Residues 34 to 54 (LVAGFYLTIIGILSTFGNGYV) form a helical membrane-spanning segment. The Cytoplasmic segment spans residues 55 to 74 (LYMSSRRKKKLRPAEIMTIN). The chain crosses the membrane as a helical span at residues 75 to 95 (LAVCDLGISVVGKPFTIISCF). The Extracellular portion of the chain corresponds to 96-108 (CHRWVFGWFGCRW). A disulfide bridge connects residues C106 and C183. The helical transmembrane segment at 109 to 129 (YGWAGFFFGCGSLITMTAVSL) threads the bilayer. The Cytoplasmic segment spans residues 130–150 (DRYLKICYLSYGVWLKRKHAY). The chain crosses the membrane as a helical span at residues 151–171 (ICLAVIWAYASFWTTMPLVGL). The Extracellular segment spans residues 172–197 (GDYAPEPFGTSCTLDWWLAQASGGGQ). A helical transmembrane segment spans residues 198 to 218 (VFILSILFFCLLLPTAVIVFS). The Cytoplasmic segment spans residues 219–252 (YAKIIAKVKSSSKEVAHFDSRIHSSHVLEVKLTK). A helical transmembrane segment spans residues 253-273 (VAMLICAGFLIAWIPYAVVSV). The Extracellular portion of the chain corresponds to 274–288 (WSAFGRPDSIPIQLS). A helical membrane pass occupies residues 289–309 (VVPTLLAKSAAMYNPIIYQVI). N6-(retinylidene)lysine is present on K296. At 310-377 (DYRFACCQAG…HSNDGDCGKK (68 aa)) the chain is on the cytoplasmic side. Residues C315 and C316 are each lipidated (S-palmitoyl cysteine). The segment at 357–377 (FTSAHVMDGESHSNDGDCGKK) is disordered. A compositionally biased stretch (basic and acidic residues) spans 363-377 (MDGESHSNDGDCGKK).

It belongs to the G-protein coupled receptor 1 family. Opsin subfamily. Post-translationally, it is uncertain whether Cys-315 or Cys-316 is palmitoylated. As to expression, expressed in the brain (at protein level). Weakly expressed in the skin and liver (at protein level). Abundantly expressed in striated muscle cells. Expressed in Math7/Atok7-dependent retinal ganglion cells in the ganglion cell layer (at protein level). Additionally expressed in horizontal and amacrine cells in the inner nuclear layer of the retina (at protein level). Expressed around the base of hair follicles and in epidermal and sebaceous gland cells of the outer ear (at protein level). Abundantly expressed in vibrissae hair follicles and weakly expressed in the vibrissae skin pad, dorsal back skin, and tail.

Its subcellular location is the cell membrane. Its function is as follows. G-protein coupled receptor which selectively activates G(i) type G proteins via ultraviolet A (UVA) light-mediated activation in the retina. Preferentially binds the chromophore 11-cis retinal and is a bistable protein that displays emission peaks at 380 nm (UVA light) and 470 nm (blue light). Required for the light-response in the inner plexiform layer, and contributes to the regulation of the light-response in the nerve fiber layer, via phosphorylated DAT/SLC6A3 dopamine uptake. Involved in local corneal and retinal circadian rhythm photoentrainment via modulation of the UVA light-induced phase-shift of the retina clock. Acts as a circadian photoreceptor in the outer ear and vibrissal pads, via modulation of circadian clock-gene expression in response to violet light during the light-to-dark transition phase and night phase of the circadian cycle. Required in the retina to negatively regulate hyaloid vessel regression during postnatal development via light-dependent OPN5-SLC32A1-DRD2-VEGFR2 signaling. Involved in the light-dependent regulation of retina and vitreous compartment dopamine levels. This is Opsin-5 (Opn5) from Mus musculus (Mouse).